We begin with the raw amino-acid sequence, 422 residues long: MENWNKYIPEGMKDILFEESNIKLNIEDQLRKIYKYSGFSEIISPTIEFYDVFNSNIQAIPQEKMYKLFDNLGRILVLRPDMTTPIGRITGTKMKDCTYPLKLCYTANIFRVNEKLNGKRGEITQSGIEIIGTNGIKSDVDSIVTAINTLLSLGLKNFKIELGEAGFFQALTENMEIKEENLKKLKEIIRNKNYVALKKFLDEISSKYSKEDFELIKNLPKLFGDIKIIEKAKALTKNKKALKSLDDIYNIYKSIENIGLEAYISIDLGMVQNIDYYTGVIFKGYVEEVGDSILSGGRYDNLIQHFGIELPATGFAINVDDIMIALKKQNTMSMDKDKKVLIFYKEEFLRKAYDFMQELKMKKIICELSLLDDDKEILLYSKKKGIDFIIGFMGEEKLFVKDLKSDKIAFLKKDEIENLLML.

Belongs to the class-II aminoacyl-tRNA synthetase family. HisZ subfamily. In terms of assembly, heteromultimer composed of HisG and HisZ subunits.

It localises to the cytoplasm. It participates in amino-acid biosynthesis; L-histidine biosynthesis; L-histidine from 5-phospho-alpha-D-ribose 1-diphosphate: step 1/9. In terms of biological role, required for the first step of histidine biosynthesis. May allow the feedback regulation of ATP phosphoribosyltransferase activity by histidine. This Clostridium botulinum (strain Langeland / NCTC 10281 / Type F) protein is ATP phosphoribosyltransferase regulatory subunit.